The sequence spans 732 residues: Bromodomain-containing factor 1 (732 aa).

Positions 1-22 are enriched in polar residues; it reads MSETFPETNTPVQTPSTESFVN. Disordered regions lie at residues 1–207, 324–380, 491–517, 556–600, and 700–732; these read MSET…NLPE, TNVA…ETKP, NKPV…EDNV, REQQ…TPPQ, and VNGQ…SEEE. The segment covering 37–51 has biased composition (low complexity); the sequence is SQDSDSNQQSSHQEP. A compositionally biased stretch (polar residues) spans 89–100; the sequence is ASQTGVIQTEVS. The span at 137–147 shows a compositional bias: acidic residues; sequence EAPEENPQEEV. The region spanning 206 to 315 is the Bromo 1 domain; the sequence is PENPIPQHQA…AQFEKLMVKV (110 aa). The segment covering 327 to 338 has biased composition (polar residues); the sequence is AEATSVATSPTT. A compositionally biased stretch (basic and acidic residues) spans 370 to 380; it reads KSKELPYETKP. The Bromo 2 domain occupies 383 to 492; sequence KKVAAELRFC…AVFDKKWANK (110 aa). Residues 529–569 adopt a coiled-coil conformation; it reads AIQVMENQIIRMRKELDELKKEHLKKLREQQAARKKKKQQK. Basic residues predominate over residues 561–579; the sequence is ARKKKKQQKGKRRAPKAKH. The segment covering 590 to 600 has biased composition (pro residues); sequence PPEPPKLTPPQ. In terms of domain architecture, NET spans 593–672; sequence PPKLTPPQPV…GDKALKNSAG (80 aa). Residues 718 to 732 are compositionally biased toward acidic residues; sequence ESSEDEASSESSEEE.

Belongs to the BET family.

The protein localises to the nucleus. Functionally, transcription factor involved in the expression of a broad class of genes including snRNAs. Required for sporulation and DNA-damage repair. Prevents the spreading of SIR silencing at telomeres and protects histone H4, but not H3, from deacetylation. The polypeptide is Bromodomain-containing factor 1 (BDF1) (Candida albicans (strain SC5314 / ATCC MYA-2876) (Yeast)).